The sequence spans 274 residues: MSRFIISSHSPNEEGNVVRVTPESAGWEYVGFEVYALTKGQTLRKETIDQEACLVLLKGKANIHTRHERWENIGLRMDVFEKIPPYSVYVPSNDVYEVQALTDLELAVCLAPGKGTYPARLIPPSEVGVEMRGAGNIERRIHNILPESKPADSLLVVEVFTPEGNWSSYPPHKHDQHNLPHESYLEETYYHQINPDHGFMVQRVYTDDRSIDETMVVKNGDVVLVPKGYHPVSAPPGYEGYYLNVMAGPVRTWKFRNDPDHEWVMESKLAAKQK.

It belongs to the isomerase IolB family.

It catalyses the reaction 5-deoxy-D-glucuronate = 5-dehydro-2-deoxy-D-gluconate. Its pathway is polyol metabolism; myo-inositol degradation into acetyl-CoA; acetyl-CoA from myo-inositol: step 4/7. Involved in the isomerization of 5-deoxy-glucuronate (5DG) to 5-dehydro-2-deoxy-D-gluconate (DKG or 2-deoxy-5-keto-D-gluconate). This Geobacillus thermodenitrificans (strain NG80-2) protein is 5-deoxy-glucuronate isomerase.